The following is a 179-amino-acid chain: Large ribosomal subunit protein uL5 (179 aa).

Belongs to the universal ribosomal protein uL5 family. In terms of assembly, part of the 50S ribosomal subunit; part of the 5S rRNA/L5/L18/L25 subcomplex. Contacts the 5S rRNA and the P site tRNA. Forms a bridge to the 30S subunit in the 70S ribosome.

Functionally, this is one of the proteins that bind and probably mediate the attachment of the 5S RNA into the large ribosomal subunit, where it forms part of the central protuberance. In the 70S ribosome it contacts protein S13 of the 30S subunit (bridge B1b), connecting the 2 subunits; this bridge is implicated in subunit movement. Contacts the P site tRNA; the 5S rRNA and some of its associated proteins might help stabilize positioning of ribosome-bound tRNAs. The sequence is that of Large ribosomal subunit protein uL5 from Vibrio campbellii (strain ATCC BAA-1116).